We begin with the raw amino-acid sequence, 96 residues long: Aspartyl/glutamyl-tRNA(Asn/Gln) amidotransferase subunit C (96 aa).

The protein belongs to the GatC family. In terms of assembly, heterotrimer of A, B and C subunits.

It catalyses the reaction L-glutamyl-tRNA(Gln) + L-glutamine + ATP + H2O = L-glutaminyl-tRNA(Gln) + L-glutamate + ADP + phosphate + H(+). It carries out the reaction L-aspartyl-tRNA(Asn) + L-glutamine + ATP + H2O = L-asparaginyl-tRNA(Asn) + L-glutamate + ADP + phosphate + 2 H(+). Functionally, allows the formation of correctly charged Asn-tRNA(Asn) or Gln-tRNA(Gln) through the transamidation of misacylated Asp-tRNA(Asn) or Glu-tRNA(Gln) in organisms which lack either or both of asparaginyl-tRNA or glutaminyl-tRNA synthetases. The reaction takes place in the presence of glutamine and ATP through an activated phospho-Asp-tRNA(Asn) or phospho-Glu-tRNA(Gln). This chain is Aspartyl/glutamyl-tRNA(Asn/Gln) amidotransferase subunit C, found in Fusobacterium nucleatum subsp. nucleatum (strain ATCC 25586 / DSM 15643 / BCRC 10681 / CIP 101130 / JCM 8532 / KCTC 2640 / LMG 13131 / VPI 4355).